The sequence spans 326 residues: Neuferricin homolog (326 aa).

The N-terminal stretch at 1–34 (MEKNRRKKDDAGVMTKTLAGVAALTFLVSFICSS) is a signal peptide. One can recognise a Cytochrome b5 heme-binding domain in the interval 98-197 (KHVFTPEQLH…KEYPLVGVVA (100 aa)).

Belongs to the cytochrome b5 family. MAPR subfamily.

Its subcellular location is the secreted. Its function is as follows. Heme-binding protein. The chain is Neuferricin homolog from Caenorhabditis briggsae.